The chain runs to 133 residues: MLDWRLASAHFILAVTLTLWSSGKVLSVDVTTTEAFDSGVIDVQSTPTVREEKSATDLTAKLLLLDELVSLENDVIETKKKRSFSGFGSPLDRLSAGSVDHKGKQRKVVDHPKRRFGIPMDRIGRNRLSNSRG.

Positions 1–27 are cleaved as a signal peptide; sequence MLDWRLASAHFILAVTLTLWSSGKVLS. Arg132 carries the arginine amide modification.

The protein belongs to the Osteocrin family. As to quaternary structure, interacts with NPR3. As to expression, enriched in neocortical regions of the developing cerebral cortex. Not expressed in other compartments of the neocortical wall or in brain regions such as the hippocampus, striatum, mediodorsal nucleus of the thalamus and cerebellum. Also expressed in bone. In developing neonatal rib bone, present at high level in osteoblasts on bone-forming surfaces, in newly incorporated osteocytes and in some late hypertrophic chondrocytes (at protein level). In adult bone, localizes specifically to osteoblasts and young osteocytes at bone-forming sites (at protein level).

Its subcellular location is the secreted. Its function is as follows. Hormone that acts as a regulator of dendritic growth in the developing cerebral cortex in response to sensory experience. Induced in the brain following membrane depolarization and inhibits dendritic branching in neurons of the developing cortex. Probably acts by binding to natriuretic peptide receptor NPR3/NPR-C, thereby preventing binding between NPR3/NPR-C and natriuretic peptides, leading to increase cGMP production. This Homo sapiens (Human) protein is Osteocrin.